A 73-amino-acid polypeptide reads, in one-letter code: MTLFSSLSSLSTGSLKSSVSSIETGSSSGSFGSNETSGWGSHHWNSCHPCPPPRPICRPCPPCRPEPRCHYKY.

Residues 1–21 (MTLFSSLSSLSTGSLKSSVSS) form the signal peptide. Low complexity predominate over residues 1–38 (MTLFSSLSSLSTGSLKSSVSSIETGSSSGSFGSNETSG). The segment at 1–43 (MTLFSSLSSLSTGSLKSSVSSIETGSSSGSFGSNETSGWGSHH) is disordered. N-linked (GlcNAc...) asparagine glycosylation occurs at Asn34.

The protein resides in the secreted. This is an uncharacterized protein from Dictyostelium discoideum (Social amoeba).